We begin with the raw amino-acid sequence, 416 residues long: UDP-N-acetylmuramoylalanine--D-glutamate ligase (416 aa).

G108–T114 contributes to the ATP binding site.

It belongs to the MurCDEF family.

Its subcellular location is the cytoplasm. It catalyses the reaction UDP-N-acetyl-alpha-D-muramoyl-L-alanine + D-glutamate + ATP = UDP-N-acetyl-alpha-D-muramoyl-L-alanyl-D-glutamate + ADP + phosphate + H(+). It functions in the pathway cell wall biogenesis; peptidoglycan biosynthesis. Cell wall formation. Catalyzes the addition of glutamate to the nucleotide precursor UDP-N-acetylmuramoyl-L-alanine (UMA). This Chlamydia trachomatis serovar A (strain ATCC VR-571B / DSM 19440 / HAR-13) protein is UDP-N-acetylmuramoylalanine--D-glutamate ligase.